A 172-amino-acid polypeptide reads, in one-letter code: Large ribosomal subunit protein uL10 (172 aa).

The protein belongs to the universal ribosomal protein uL10 family. Part of the ribosomal stalk of the 50S ribosomal subunit. The N-terminus interacts with L11 and the large rRNA to form the base of the stalk. The C-terminus forms an elongated spine to which L12 dimers bind in a sequential fashion forming a multimeric L10(L12)X complex.

In terms of biological role, forms part of the ribosomal stalk, playing a central role in the interaction of the ribosome with GTP-bound translation factors. The chain is Large ribosomal subunit protein uL10 (rplJ) from Caulobacter vibrioides (strain ATCC 19089 / CIP 103742 / CB 15) (Caulobacter crescentus).